A 501-amino-acid chain; its full sequence is Glucans biosynthesis protein G (501 aa).

The signal sequence occupies residues M1–A24.

Belongs to the OpgD/OpgG family.

The protein localises to the periplasm. It participates in glycan metabolism; osmoregulated periplasmic glucan (OPG) biosynthesis. Functionally, involved in the biosynthesis of osmoregulated periplasmic glucans (OPGs). This chain is Glucans biosynthesis protein G, found in Rhodopseudomonas palustris (strain BisA53).